Consider the following 271-residue polypeptide: MTYLQESSRPAVTVPKLQAMRDAGEKIAMLTCYDASFAALLDRSGVDVLLIGDSLGNVLQGHTTTLPVSLDDIAYHTACVARAQPRALIIADLPFGTYGTPAEAFASAVKLMRAGAQMIKLEGGEWLAETIRFLVERAVPVCAHVGLTPQSVHAFGGFKVQGKTEAGAAQLLRDARAVEDAGAQLVVLEAVPTLVASEVTHMLKIPTIGIGAGTDCSGQVLVLHDMLGIFPGKRPRFVKDFMQGQPTIQAAVEAYVRAVKDSSFPGPEHSF.

Residues Asp-53 and Asp-92 each coordinate Mg(2+). 3-methyl-2-oxobutanoate contacts are provided by residues 53–54 (DS), Asp-92, and Lys-120. Residue Glu-122 participates in Mg(2+) binding. Residue Glu-189 is the Proton acceptor of the active site.

It belongs to the PanB family. Homodecamer; pentamer of dimers. Mg(2+) is required as a cofactor.

Its subcellular location is the cytoplasm. The enzyme catalyses 3-methyl-2-oxobutanoate + (6R)-5,10-methylene-5,6,7,8-tetrahydrofolate + H2O = 2-dehydropantoate + (6S)-5,6,7,8-tetrahydrofolate. Its pathway is cofactor biosynthesis; (R)-pantothenate biosynthesis; (R)-pantoate from 3-methyl-2-oxobutanoate: step 1/2. Catalyzes the reversible reaction in which hydroxymethyl group from 5,10-methylenetetrahydrofolate is transferred onto alpha-ketoisovalerate to form ketopantoate. In Burkholderia ambifaria (strain ATCC BAA-244 / DSM 16087 / CCUG 44356 / LMG 19182 / AMMD) (Burkholderia cepacia (strain AMMD)), this protein is 3-methyl-2-oxobutanoate hydroxymethyltransferase 1.